A 160-amino-acid polypeptide reads, in one-letter code: MPSFDIVSEIDTVELRNAVDNANRELSTRFDFRNVNASFELVEENVKVSAEGDFQLKQMRDILRGHLAKRNVDANAMDAQNPEVTGKNWHQNILFRQGIDTPTAKKLVKLIKDAKLKVQASIQGDKVRVTGKKRDDLQATIAAIREAELGQPFQFNNFRD.

The protein belongs to the YajQ family.

Its function is as follows. Nucleotide-binding protein. The polypeptide is Nucleotide-binding protein VP1617 (Vibrio parahaemolyticus serotype O3:K6 (strain RIMD 2210633)).